Consider the following 319-residue polypeptide: Tetrahydromethanopterin S-methyltransferase subunit H (319 aa).

The protein belongs to the MtrH family. As to quaternary structure, the complex is composed of 8 subunits; MtrA, MtrB, MtrC, MtrD, MtrE, MtrF, MtrG and MtrH.

The catalysed reaction is 5-methyl-5,6,7,8-tetrahydromethanopterin + coenzyme M + 2 Na(+)(in) = 5,6,7,8-tetrahydromethanopterin + methyl-coenzyme M + 2 Na(+)(out). It participates in one-carbon metabolism; methanogenesis from CO(2); methyl-coenzyme M from 5,10-methylene-5,6,7,8-tetrahydromethanopterin: step 2/2. Part of a complex that catalyzes the formation of methyl-coenzyme M and tetrahydromethanopterin from coenzyme M and methyl-tetrahydromethanopterin. This is an energy-conserving, sodium-ion translocating step. MtrH catalyzes the transfer of the methyl group from methyl-tetrahydromethanopterin to the corrinoid prosthetic group of MtrA. The sequence is that of Tetrahydromethanopterin S-methyltransferase subunit H from Methanococcus maripaludis (strain DSM 14266 / JCM 13030 / NBRC 101832 / S2 / LL).